A 76-amino-acid polypeptide reads, in one-letter code: Defensin-like protein 71 (76 aa).

Positions 1–22 (MAMTQVFVIFILLATSLCNSNA) are cleaved as a signal peptide. 4 disulfides stabilise this stretch: Cys36/Cys74, Cys40/Cys63, Cys49/Cys72, and Cys53/Cys73.

The protein belongs to the DEFL family.

It is found in the secreted. This chain is Defensin-like protein 71 (LCR84), found in Arabidopsis thaliana (Mouse-ear cress).